Here is a 185-residue protein sequence, read N- to C-terminus: NOP protein chaperone 1 (185 aa).

The segment at 1–40 (MEVHGKPKASPSCSSPTRDSSGVPVSKELLTAGSDGRGGI) is disordered. Low complexity predominate over residues 10-21 (SPSCSSPTRDSS). Residues serine 34 and serine 66 each carry the phosphoserine modification. Residues 118 to 185 (FEMNQSDSKE…LDSPASKKKK (68 aa)) are disordered. Acidic residues predominate over residues 143–152 (SESEDEDDSI). Phosphoserine is present on serine 178.

Interacts with NOP58, RUVBL1 and RUVBL2; the interactions are direct and NOPCHAP1 bridges the association of NOP58 with RUVBL1:RUVBL2 even in absence of snoRNAs. The interactions with RUVBL1 and RUVBL2 are disrupted upon ATP binding.

The protein localises to the nucleus. Client-loading PAQosome/R2TP complex cofactor that selects NOP58 to promote box C/D small nucleolar ribonucleoprotein (snoRNP) assembly. Acts as a bridge between NOP58 and the R2TP complex via RUVBL1:RUVBL2. The protein is NOP protein chaperone 1 of Homo sapiens (Human).